The primary structure comprises 152 residues: Large-conductance mechanosensitive channel (152 aa).

The next 3 helical transmembrane spans lie at 21–41 (IDLA…DSLV), 44–64 (VVMP…NKFL), and 92–112 (GNFI…FWMV).

The protein belongs to the MscL family. In terms of assembly, homopentamer.

The protein localises to the cell inner membrane. Its function is as follows. Channel that opens in response to stretch forces in the membrane lipid bilayer. May participate in the regulation of osmotic pressure changes within the cell. The chain is Large-conductance mechanosensitive channel from Bordetella bronchiseptica (strain ATCC BAA-588 / NCTC 13252 / RB50) (Alcaligenes bronchisepticus).